We begin with the raw amino-acid sequence, 498 residues long: ATP synthase subunit alpha 1 (498 aa).

It belongs to the ATPase alpha/beta chains family. In terms of assembly, F-type ATPases have 2 components, CF(1) - the catalytic core - and CF(0) - the membrane proton channel. CF(1) has five subunits: alpha(3), beta(3), gamma(1), delta(1), epsilon(1). CF(0) has three main subunits: a(1), b(2) and c(9-12). The alpha and beta chains form an alternating ring which encloses part of the gamma chain. CF(1) is attached to CF(0) by a central stalk formed by the gamma and epsilon chains, while a peripheral stalk is formed by the delta and b chains.

It is found in the cell membrane. It carries out the reaction ATP + H2O + 4 H(+)(in) = ADP + phosphate + 5 H(+)(out). Produces ATP from ADP in the presence of a proton gradient across the membrane. The alpha chain is a regulatory subunit. The protein is ATP synthase subunit alpha 1 of Listeria monocytogenes serotype 4b (strain F2365).